Reading from the N-terminus, the 123-residue chain is Small ribosomal subunit protein uS12cz/uS12cy (123 aa).

Belongs to the universal ribosomal protein uS12 family. Part of the 30S ribosomal subunit.

The protein resides in the plastid. It is found in the chloroplast. Functionally, with S4 and S5 plays an important role in translational accuracy. Located at the interface of the 30S and 50S subunits. The chain is Small ribosomal subunit protein uS12cz/uS12cy (rps12-A) from Angiopteris evecta (Mule's foot fern).